The following is a 777-amino-acid chain: DISP complex protein LRCH3 (777 aa).

LRR repeat units lie at residues 56-79 (AAVT…AANH), 81-104 (LTDT…ACHF), 105-127 (VSLE…ILNL), 128-150 (QALT…LCNL), 152-172 (LKVL…IGHL), 173-195 (RHLM…IGNL), 196-218 (EALR…LAEL), 220-239 (LIRL…CYRN), 240-264 (LRHL…CIKG), and 266-290 (VHIF…DRRP). The tract at residues 56 to 290 (AAVTGVLSLS…PDLPDYDRRP (235 aa)) is mediates interaction with DOCK7. Ser324, Ser415, and Ser419 each carry phosphoserine. Residues 382-648 (TAEEEEAEVR…DSTDSITGQN (267 aa)) are mediates direct interaction with MYO6. The interval 568–590 (FTPLKSDDRPNALLSSPATETVH) is disordered. 2 positions are modified to phosphoserine: Ser611 and Ser628. Positions 621-653 (ETNKGHASPLPPSAAPTTDSTDSITGQNSRQRE) are disordered. Low complexity predominate over residues 635-645 (APTTDSTDSIT). The 114-residue stretch at 652-765 (REEELELIDQ…VTVQALLELA (114 aa)) folds into the Calponin-homology (CH) domain.

Component of the DOCK7-induced septin displacement/DISP complex, at least composed of DOCK7, LRCH3 and MYO6.

It localises to the cytoplasm. As part of the DISP complex, may regulate the association of septins with actin and thereby regulate the actin cytoskeleton. The polypeptide is DISP complex protein LRCH3 (Homo sapiens (Human)).